Consider the following 169-residue polypeptide: MCKPRGPKLKTYRPRRVLDWTVKLLCRQAADEKDFKKTSTYSKLDVEAMHSSFFFNNAPIEEAEASSQPEAPFLLPLKKISIFFAKKNYLYNKGKFSRNKQTYRTGVYLCIWLTVLTVVGLYFYFYLMSMKFTYNYLLFLFFLGLFFYKFFIKKNNKKFEVHTDLFENF.

The protein localises to the mitochondrion. This is an uncharacterized protein from Paramecium tetraurelia.